Here is a 92-residue protein sequence, read N- to C-terminus: UPF0358 protein Exig_1994 (92 aa).

This sequence belongs to the UPF0358 family.

The sequence is that of UPF0358 protein Exig_1994 from Exiguobacterium sibiricum (strain DSM 17290 / CCUG 55495 / CIP 109462 / JCM 13490 / 255-15).